The primary structure comprises 665 residues: DNA ligase (665 aa).

Residues 31-35 (DEEFD), 80-81 (SL), and Glu111 contribute to the NAD(+) site. Lys113 (N6-AMP-lysine intermediate) is an active-site residue. Residues Arg134, Glu171, Lys287, and Lys311 each contribute to the NAD(+) site. Zn(2+) contacts are provided by Cys405, Cys408, Cys423, and Cys429. The region spanning 588 to 665 (FTNHAFQGKI…NEKEFISLCH (78 aa)) is the BRCT domain.

The protein belongs to the NAD-dependent DNA ligase family. LigA subfamily. The cofactor is Mg(2+). Mn(2+) serves as cofactor.

The catalysed reaction is NAD(+) + (deoxyribonucleotide)n-3'-hydroxyl + 5'-phospho-(deoxyribonucleotide)m = (deoxyribonucleotide)n+m + AMP + beta-nicotinamide D-nucleotide.. DNA ligase that catalyzes the formation of phosphodiester linkages between 5'-phosphoryl and 3'-hydroxyl groups in double-stranded DNA using NAD as a coenzyme and as the energy source for the reaction. It is essential for DNA replication and repair of damaged DNA. This chain is DNA ligase, found in Protochlamydia amoebophila (strain UWE25).